Here is a 150-residue protein sequence, read N- to C-terminus: Oleosin Ara h 10.0102 (150 aa).

2 helical membrane passes run 39–59 (VIAVITGLPIGGTLLLFAGLA) and 73–93 (LFILFSPVIVPATIVVGLSVA).

The protein belongs to the oleosin family. Expressed in seeds (at protein level).

It localises to the lipid droplet. The protein resides in the membrane. In terms of biological role, may have a structural role to stabilize the lipid body during desiccation of the seed by preventing coalescence of the oil. Probably interacts with both lipid and phospholipid moieties of lipid bodies. May also provide recognition signals for specific lipase anchorage in lipolysis during seedling growth. The polypeptide is Oleosin Ara h 10.0102 (Arachis hypogaea (Peanut)).